The primary structure comprises 96 residues: uncharacterized protein (96 aa).

Residues cysteine 10, cysteine 16, and cysteine 55 each contribute to the [3Fe-4S] cluster site. Positions 67–96 (AGDGERASADPAPSPAEAERHAAKDQHNLG) are disordered. Residues 83 to 96 (EAERHAAKDQHNLG) are compositionally biased toward basic and acidic residues.

It depends on [3Fe-4S] cluster as a cofactor.

Electron transport protein for the cytochrome systems. This is an uncharacterized protein from Bradyrhizobium diazoefficiens (strain JCM 10833 / BCRC 13528 / IAM 13628 / NBRC 14792 / USDA 110).